Reading from the N-terminus, the 440-residue chain is Sequestosome-1 (440 aa).

Ala-2 is modified (N-acetylalanine). The tract at residues 2–50 (ASLTVKAYLLGKEDAAREIRRFSFCCSPEPEAEAEAAAGPGPCERLLSR) is interaction with LCK. The 100-residue stretch at 3 to 102 (SLTVKAYLLG…DIFRIYIKEK (100 aa)) folds into the PB1 domain. Position 24 is a phosphoserine (Ser-24). The interaction with PRKCZ and dimerization stretch occupies residues 43-107 (PCERLLSRVA…YIKEKKECRR (65 aa)). Residues 50–80 (RVAALFPALRPGGFQAHYRDEDGDLVAFSSD) are interaction with PAWR. Residue Lys-91 forms a Glycyl lysine isopeptide (Lys-Gly) (interchain with G-Cter in ubiquitin) linkage. The interval 122–224 (VHPNVICDGC…EARPGPTAES (103 aa)) is interaction with GABRR3. The segment at 123–173 (HPNVICDGCNGPVVGTRYKCSVCPDYDLCSVCEGKGLHRGHTKLAFPSPFG) adopts a ZZ-type zinc-finger fold. Positions 128, 131, 142, and 145 each coordinate Zn(2+). Tyr-148 bears the Phosphotyrosine mark. Zn(2+) is bound by residues Cys-151, Cys-154, His-160, and His-163. Phosphoserine is present on residues Ser-170 and Ser-176. Residues 170 to 220 (SPFGHLSEGFSHSRWLRKVKHGHFGWPGWEMGPPGNWSPRPPRAGEARPGP) form an LIM protein-binding (LB) region. A Glycyl lysine isopeptide (Lys-Gly) (interchain with G-Cter in ubiquitin) cross-link involves residue Lys-189. The tract at residues 196 to 235 (PGWEMGPPGNWSPRPPRAGEARPGPTAESASGPSEDPSVN) is disordered. A phosphoserine mark is found at Ser-207, Ser-233, Ser-249, and Ser-266. A TRAF6-binding motif is present at residues 228 to 233 (PSEDPS). The disordered stretch occupies residues 264-390 (KRSRLTPVSP…ALYPHLPPEA (127 aa)). Thr-269 carries the post-translational modification Phosphothreonine. The segment at 269–440 (TPVSPESSST…IQYSKHPPPL (172 aa)) is interaction with NTRK1. A phosphoserine mark is found at Ser-272 and Ser-282. Low complexity predominate over residues 283-296 (SSQPSSCCSDPSKP). S-palmitoyl cysteine attachment occurs at residues Cys-289 and Cys-290. Ser-306 carries the phosphoserine modification. Basic and acidic residues predominate over residues 310 to 324 (QMRKIALESEGRPEE). Positions 321-342 (RPEEQMESDNCSGGDDDWTHLS) are MAP1LC3B-binding. Phosphoserine is present on residues Ser-328 and Ser-332. An LIR motif is present at residues 336 to 341 (DDWTHL). Residues 337–347 (DWTHLSSKEVD) are compositionally biased toward basic and acidic residues. Residues 347–352 (DPSTGE) are interaction with KEAP1. Ser-349 carries the phosphoserine; by ULK1 modification. Positions 351–373 (GELQSLQMPESEGPSSLDPSQEG) are enriched in polar residues. Phosphoserine occurs at positions 355, 361, 365, and 366. One can recognise a UBA domain in the interval 389–434 (EADPRLIESLSQMLSMGFSDEGGWLTRLLQTKNYDIGAALDTIQYS). Ser-403 is subject to Phosphoserine; by CK2, ULK1 and TBK1. Ser-407 bears the Phosphoserine; by ULK1 mark. N6-acetyllysine; alternate is present on residues Lys-420 and Lys-435. A Glycyl lysine isopeptide (Lys-Gly) (interchain with G-Cter in ubiquitin); alternate cross-link involves residue Lys-420. Lys-435 participates in a covalent cross-link: Glycyl lysine isopeptide (Lys-Gly) (interchain with G-Cter in SUMO2); alternate.

Homooligomer or heterooligomer; may form homotypic arrays. Dimerization interferes with ubiquitin binding. Component of a ternary complex with PAWR and PRKCZ. Forms a complex with JUB/Ajuba, PRKCZ and TRAF6. Identified in a complex with TRAF6 and CYLD. Identified in a heterotrimeric complex with ubiquitin and ZFAND5, where ZFAND5 and SQSTM1 both interact with the same ubiquitin molecule. Interacts (via LIR motif) with MAP1LC3A and MAP1LC3B, as well as with other ATG8 family members, including GABARAP, GABARAPL1 and GABARAPL2; these interactions are necessary for the recruitment MAP1 LC3 family members to inclusion bodies containing polyubiquitinated protein aggregates and for their degradation by autophagy. Interacts directly with PRKCI and PRKCZ. Interacts with EBI3, LCK, RASA1, NR2F2, NTRK1, NTRK2, NTRK3, NBR1, MAP2K5 and MAPKAPK5. Upon TNF-alpha stimulation, interacts with RIPK1 probably bridging IKBKB to the TNF-R1 complex composed of TNF-R1/TNFRSF1A, TRADD and RIPK1. Interacts with the proteasome subunits PSMD4 and PSMC2. Interacts with TRAF6. Interacts with 'Lys-63'-linked polyubiquitinated MAPT/TAU. Interacts with FHOD3. Interacts with CYLD. Interacts with SESN1. Interacts with SESN2. Interacts with ULK1. Interacts with UBD. Interacts with WDR81; the interaction is direct and regulates the interaction of SQSTM1 with ubiquitinated proteins. Interacts with WDFY3; this interaction is required to recruit WDFY3 to cytoplasmic bodies and to PML bodies. Interacts with LRRC25. Interacts with STING1; leading to relocalization of STING1 to autophagosomes. Interacts (when phosphorylated at Ser-349) with KEAP1; the interaction is direct and inactivates the BCR(KEAP1) complex by sequestering KEAP1 in inclusion bodies, promoting its degradation. Interacts with MOAP1; promoting dissociation of SQSTM1 inclusion bodies that sequester KEAP1. Interacts with GBP1. Interacts with TAX1BP1. Interacts with (ubiquitinated) PEX5; specifically binds PEX5 ubiquitinated at 'Lys-209' in response to reactive oxygen species (ROS). Interacts (via PB1 domain) with TNS2; the interaction leads to sequestration of TNS2 in cytoplasmic aggregates with SQSTM1 and promotes TNS2 ubiquitination and proteasomal degradation. Interacts with IRS1; the interaction is disrupted by the presence of tensin TNS2. Interacts with TRIM5. Interacts with TRIM11 (when ubiquitinated); promoting AIM2 recruitment to autophagosomes and autophagy-dependent degradation of AIM2. Interacts with TRIM13. Interacts with TRIM16. Interacts with TRIM23. Interacts with TRIM50. Interacts with TRIM55. Interacts with ECSIT; this interaction inhibits TLR4 signaling via functional regulation of the TRAF6-ECSIT complex. Interacts with GABRR1, GABRR2 and GABRR3. Interacts with WDR83. Interacts with GRB2. Interacts with USP12; the interaction is independent of USP12 deubiquitinase activity and may be involved in regulation of autophagic flux. Interacts with ASB6. In terms of processing, phosphorylation at Ser-407 by ULK1 destabilizes the UBA dimer interface and increases binding affinity to ubiquitinated proteins. Phosphorylation at Ser-407 also primes for subsequent phosphorylation at Ser-403. Phosphorylation at Ser-403 by CK2 or ULK1 promotes binding to ubiquitinated proteins by increasing the affinity between the UBA domain and polyubiquitin chains. Phosphorylation at Ser-403 by ULK1 is stimulated by SESN2. Phosphorylated at Ser-403 by TBK1, leading to promote relocalization of 'Lys-63'-linked ubiquitinated STING1 to autophagosomes. Phosphorylation at Ser-349 by ULK1 promotes interaction with KEAP1 and inactivation of the BCR(KEAP1) complex, promoting NFE2L2/NRF2 nuclear accumulation and expression of phase II detoxifying enzymes. Phosphorylated in vitro by TTN. Post-translationally, ubiquitinated by UBE2J1 and RNF26 at Lys-435: ubiquitinated SQSTM1 attracts specific vesicle-associated adapters, forming a molecular bridge that restrains cognate vesicles in the perinuclear region and organizes the endosomal pathway for efficient cargo transport. Ubiquitination by UBE2D2 and UBE2D3 increases its ability to bind polyubiquitin chains by destabilizing the UBA dimer interface. Deubiquitination by USP15 releases target vesicles for fast transport into the cell periphery. Ubiquitinated by the BCR(KEAP1) complex at Lys-420, increasing SQSTM1 sequestering activity and promoting its degradation. Ubiquitinated via 'Lys-29' and 'Lys-33'-linked polyubiquitination leading to xenophagic targeting of bacteria and inhibition of their replication. Acetylated at Lys-420 and Lys-435 by KAT5/TIP60, promotes activity by destabilizing the UBA dimer interface and increases binding affinity to ubiquitinated proteins. Deacetylated by HDAC6. In terms of processing, palmitoylation at Cys-289 and Cys-290 by ZDHHC19 is required for efficient autophagic degradation of SQSTM1-cargo complexes by promoting affinity for ATG8 proteins and recruitment of p62 bodies to autophagosomes. Dealmitoylated at Cys-289 and Cys-290 by LYPLA1. Post-translationally, (Microbial infection) Cleaved by S.pyogenes SpeB protease; leading to its degradation. Degradation by SpeB prevents autophagy, promoting to S.pyogenes intracellular replication. (Microbial infection) Deubiquitinated by Epstein-Barr virus BPLF1; leading to inhibition of the recruitment of MAP1LC3A/LC3 to SQSTM1-positive structures. In terms of tissue distribution, ubiquitously expressed.

It localises to the cytoplasmic vesicle. The protein localises to the autophagosome. It is found in the preautophagosomal structure. The protein resides in the cytoplasm. Its subcellular location is the cytosol. It localises to the nucleus. The protein localises to the PML body. It is found in the late endosome. The protein resides in the lysosome. Its subcellular location is the endoplasmic reticulum. It localises to the myofibril. The protein localises to the sarcomere. Its function is as follows. Molecular adapter required for selective macroautophagy (aggrephagy) by acting as a bridge between polyubiquitinated proteins and autophagosomes. Promotes the recruitment of ubiquitinated cargo proteins to autophagosomes via multiple domains that bridge proteins and organelles in different steps. SQSTM1 first mediates the assembly and removal of ubiquitinated proteins by undergoing liquid-liquid phase separation upon binding to ubiquitinated proteins via its UBA domain, leading to the formation of insoluble cytoplasmic inclusions, known as p62 bodies. SQSTM1 then interacts with ATG8 family proteins on autophagosomes via its LIR motif, leading to p62 body recruitment to autophagosomes, followed by autophagic clearance of ubiquitinated proteins. SQSTM1 is itself degraded along with its ubiquitinated cargos. Also required to recruit ubiquitinated proteins to PML bodies in the nucleus. Also involved in autophagy of peroxisomes (pexophagy) in response to reactive oxygen species (ROS) by acting as a bridge between ubiquitinated PEX5 receptor and autophagosomes. Acts as an activator of the NFE2L2/NRF2 pathway via interaction with KEAP1: interaction inactivates the BCR(KEAP1) complex by sequestering the complex in inclusion bodies, promoting nuclear accumulation of NFE2L2/NRF2 and subsequent expression of cytoprotective genes. Promotes relocalization of 'Lys-63'-linked ubiquitinated STING1 to autophagosomes. Involved in endosome organization by retaining vesicles in the perinuclear cloud: following ubiquitination by RNF26, attracts specific vesicle-associated adapters, forming a molecular bridge that restrains cognate vesicles in the perinuclear region and organizes the endosomal pathway for efficient cargo transport. Sequesters tensin TNS2 into cytoplasmic puncta, promoting TNS2 ubiquitination and proteasomal degradation. May regulate the activation of NFKB1 by TNF-alpha, nerve growth factor (NGF) and interleukin-1. May play a role in titin/TTN downstream signaling in muscle cells. Adapter that mediates the interaction between TRAF6 and CYLD. This chain is Sequestosome-1, found in Homo sapiens (Human).